We begin with the raw amino-acid sequence, 326 residues long: Fructose-1,6-bisphosphatase class 1 2 (326 aa).

Mg(2+) contacts are provided by E84, D103, L105, and D106. Residues 106-109 (DGSS), N198, and K262 contribute to the substrate site. A Mg(2+)-binding site is contributed by E268.

Belongs to the FBPase class 1 family. In terms of assembly, homotetramer. Requires Mg(2+) as cofactor.

Its subcellular location is the cytoplasm. It carries out the reaction beta-D-fructose 1,6-bisphosphate + H2O = beta-D-fructose 6-phosphate + phosphate. Its pathway is carbohydrate biosynthesis; gluconeogenesis. This Pseudoalteromonas translucida (strain TAC 125) protein is Fructose-1,6-bisphosphatase class 1 2.